We begin with the raw amino-acid sequence, 558 residues long: MLRNTSRVLMSHFARANIPTPVNQPMLNYEVGSTHRKLLKEACAKFRNTTIDIPCVVGGKEIRTGDVQKQLICSDHNKVLATFHQANAELLKLAVENSMESKAQWESLPFEARSAVFLKAADLLNTKYRYDVLASTMLGQGKTVWQAEIDAAAEGIDFLRFNVKYAQEIYQQQPPANSAGCWNILTYQPLEGYVVAISPFNFTAIGLNLSSAPALMGNVVLWKPASTAVLSNWIVYKALLEAGLPAGVIQFLPGSGRLVGEHLFNNRNFSGLHFTGSTGVFNDIYKKTADNLVAGVYKGYPRIVGETGGKDFHFLHNSGDVENFVNNTLRGAFEYQGQKCSACSRAYIPQSLWPQIKDRLVTGVKSMKMGQSDDFSSFVSAVIDKNSFNNIQSYIEHAKASPDAEIIVGGKCDSSVGWFVEPTIILAKDPHYKSMEEEIFGPVLTIYVYEDSKFEETLKICDETSPYALTGSIFSTCRYAIETAHKYLKNAAGNFYINDKCTGAVVGQQPFGGSRASGTNDKAGSSLNLLRWISARTIKENFVPLTSFTYPYMIDPEN.

NAD(+) contacts are provided by residues S198, K223, and 276–280; that span reads GSTGV. Catalysis depends on E306, which acts as the Proton acceptor. The active-site Nucleophile is C340. E438 is an NAD(+) binding site.

Belongs to the aldehyde dehydrogenase family.

It localises to the mitochondrion matrix. The enzyme catalyses L-glutamate 5-semialdehyde + NAD(+) + H2O = L-glutamate + NADH + 2 H(+). It participates in amino-acid degradation; L-proline degradation into L-glutamate; L-glutamate from L-proline: step 2/2. Its function is as follows. Irreversible conversion of delta-1-pyrroline-5-carboxylate (P5C), derived either from proline or ornithine, to glutamate. This is a necessary step in the pathway interconnecting the urea and tricarboxylic acid cycles. The sequence is that of Delta-1-pyrroline-5-carboxylate dehydrogenase, mitochondrial from Dictyostelium discoideum (Social amoeba).